We begin with the raw amino-acid sequence, 957 residues long: Glycine dehydrogenase (decarboxylating) (957 aa).

K708 carries the post-translational modification N6-(pyridoxal phosphate)lysine.

Belongs to the GcvP family. The glycine cleavage system is composed of four proteins: P, T, L and H. Pyridoxal 5'-phosphate is required as a cofactor.

It catalyses the reaction N(6)-[(R)-lipoyl]-L-lysyl-[glycine-cleavage complex H protein] + glycine + H(+) = N(6)-[(R)-S(8)-aminomethyldihydrolipoyl]-L-lysyl-[glycine-cleavage complex H protein] + CO2. Its function is as follows. The glycine cleavage system catalyzes the degradation of glycine. The P protein binds the alpha-amino group of glycine through its pyridoxal phosphate cofactor; CO(2) is released and the remaining methylamine moiety is then transferred to the lipoamide cofactor of the H protein. In Escherichia coli O7:K1 (strain IAI39 / ExPEC), this protein is Glycine dehydrogenase (decarboxylating).